We begin with the raw amino-acid sequence, 598 residues long: Pescadillo homolog (598 aa).

The tract at residues Q296–V317 is disordered. The 95-residue stretch at P345–P439 folds into the BRCT domain. Disordered stretches follow at residues D452–E501, G515–E544, and M564–K598. Positions E463–D485 are enriched in acidic residues. 3 stretches are compositionally biased toward basic and acidic residues: residues K520 to S532, Q570 to K579, and A586 to K598. Residues Q557 to K598 adopt a coiled-coil conformation.

This sequence belongs to the pescadillo family. As to quaternary structure, component of the NOP7 complex, composed of ERB1, NOP7 and YTM1. The complex is held together by ERB1, which interacts with NOP7 via its N-terminal domain and with YTM1 via a high-affinity interaction between the seven-bladed beta-propeller domains of the 2 proteins. The NOP7 complex associates with the 66S pre-ribosome.

It localises to the nucleus. The protein localises to the nucleolus. Its subcellular location is the nucleoplasm. Component of the NOP7 complex, which is required for maturation of the 25S and 5.8S ribosomal RNAs and formation of the 60S ribosome. The chain is Pescadillo homolog from Candida glabrata (strain ATCC 2001 / BCRC 20586 / JCM 3761 / NBRC 0622 / NRRL Y-65 / CBS 138) (Yeast).